Here is a 98-residue protein sequence, read N- to C-terminus: NADH-ubiquinone oxidoreductase chain 4L (98 aa).

The next 3 membrane-spanning stretches (helical) occupy residues 1 to 21 (MSLT…GLLM), 29 to 49 (SLLC…MTIL), and 61 to 81 (IILL…LVMV).

It belongs to the complex I subunit 4L family. Core subunit of respiratory chain NADH dehydrogenase (Complex I) which is composed of 45 different subunits.

Its subcellular location is the mitochondrion inner membrane. The enzyme catalyses a ubiquinone + NADH + 5 H(+)(in) = a ubiquinol + NAD(+) + 4 H(+)(out). Core subunit of the mitochondrial membrane respiratory chain NADH dehydrogenase (Complex I) which catalyzes electron transfer from NADH through the respiratory chain, using ubiquinone as an electron acceptor. Part of the enzyme membrane arm which is embedded in the lipid bilayer and involved in proton translocation. This Chiroderma trinitatum (Little big-eyed bat) protein is NADH-ubiquinone oxidoreductase chain 4L (MT-ND4L).